The sequence spans 552 residues: Chaperonin GroEL (552 aa).

ATP-binding positions include 30–33, Lys51, 87–91, Gly415, and Asp496; these read TLGP and DGTTT.

It belongs to the chaperonin (HSP60) family. In terms of assembly, forms a cylinder of 14 subunits composed of two heptameric rings stacked back-to-back. Interacts with the co-chaperonin GroES.

It localises to the cytoplasm. It carries out the reaction ATP + H2O + a folded polypeptide = ADP + phosphate + an unfolded polypeptide.. Functionally, together with its co-chaperonin GroES, plays an essential role in assisting protein folding. The GroEL-GroES system forms a nano-cage that allows encapsulation of the non-native substrate proteins and provides a physical environment optimized to promote and accelerate protein folding. The protein is Chaperonin GroEL of Paramagnetospirillum magneticum (strain ATCC 700264 / AMB-1) (Magnetospirillum magneticum).